A 756-amino-acid polypeptide reads, in one-letter code: Inactive carboxypeptidase-like protein X2 (756 aa).

An N-terminal signal peptide occupies residues 1–25; the sequence is MSRPGTATPALALVLLAVTLAGVGA. The tract at residues 51 to 131 is disordered; the sequence is EPELETFSPP…DHSVRVARED (81 aa). Basic and acidic residues predominate over residues 68–78; sequence EWERRPQEPRP. A compositionally biased stretch (basic residues) spans 79-90; that stretch reads PKRATKPKKAPK. A compositionally biased stretch (basic and acidic residues) spans 113-131; it reads KSSEKAANDDHSVRVARED. Positions 134–293 constitute an F5/8 type C domain; sequence ESCPPLGLET…ICMRMEILGC (160 aa). Cys136 and Cys293 are joined by a disulfide. N-linked (GlcNAc...) asparagine glycosylation is found at Asn231, Asn241, Asn281, Asn337, and Asn491. The 324-residue stretch at 317–640 folds into the Peptidase M14 domain; the sequence is KHHNYKEMRQ…ESLIVFMEQV (324 aa).

The protein belongs to the peptidase M14 family.

The protein resides in the secreted. May be involved in cell-cell interactions. In Homo sapiens (Human), this protein is Inactive carboxypeptidase-like protein X2 (CPXM2).